The sequence spans 349 residues: Flap endonuclease 1-B (349 aa).

Positions 1–105 (MGIKGLTKLL…GELAKRLARR (105 aa)) are N-domain. Position 34 (D34) interacts with Mg(2+). Residue R71 coordinates DNA. Positions 87, 159, 161, 180, and 182 each coordinate Mg(2+). The tract at residues 123–254 (DMEKYSKRTV…QTALKLIRQH (132 aa)) is I-domain. E159 is a DNA binding site. DNA is bound by residues G232 and D234. D234 contributes to the Mg(2+) binding site.

It belongs to the XPG/RAD2 endonuclease family. FEN1 subfamily. As to quaternary structure, interacts with PCNA. Three molecules of FEN1 bind to one PCNA trimer with each molecule binding to one PCNA monomer. PCNA stimulates the nuclease activity without altering cleavage specificity. The cofactor is Mg(2+). In terms of processing, phosphorylated. Phosphorylation upon DNA damage induces relocalization to the nuclear plasma.

The protein localises to the nucleus. The protein resides in the nucleolus. It is found in the nucleoplasm. It localises to the mitochondrion. Functionally, structure-specific nuclease with 5'-flap endonuclease and 5'-3' exonuclease activities involved in DNA replication and repair. During DNA replication, cleaves the 5'-overhanging flap structure that is generated by displacement synthesis when DNA polymerase encounters the 5'-end of a downstream Okazaki fragment. It enters the flap from the 5'-end and then tracks to cleave the flap base, leaving a nick for ligation. Also involved in the long patch base excision repair (LP-BER) pathway, by cleaving within the apurinic/apyrimidinic (AP) site-terminated flap. Acts as a genome stabilization factor that prevents flaps from equilibrating into structures that lead to duplications and deletions. Also possesses 5'-3' exonuclease activity on nicked or gapped double-stranded DNA, and exhibits RNase H activity. Also involved in replication and repair of rDNA and in repairing mitochondrial DNA. The polypeptide is Flap endonuclease 1-B (Physcomitrium patens (Spreading-leaved earth moss)).